The chain runs to 158 residues: SsrA-binding protein (158 aa).

Positions 133–147 (KRQALRERQDNREAQ) are enriched in basic and acidic residues. Positions 133-158 (KRQALRERQDNREAQRAMASRKHLGE) are disordered.

Belongs to the SmpB family.

It is found in the cytoplasm. In terms of biological role, required for rescue of stalled ribosomes mediated by trans-translation. Binds to transfer-messenger RNA (tmRNA), required for stable association of tmRNA with ribosomes. tmRNA and SmpB together mimic tRNA shape, replacing the anticodon stem-loop with SmpB. tmRNA is encoded by the ssrA gene; the 2 termini fold to resemble tRNA(Ala) and it encodes a 'tag peptide', a short internal open reading frame. During trans-translation Ala-aminoacylated tmRNA acts like a tRNA, entering the A-site of stalled ribosomes, displacing the stalled mRNA. The ribosome then switches to translate the ORF on the tmRNA; the nascent peptide is terminated with the 'tag peptide' encoded by the tmRNA and targeted for degradation. The ribosome is freed to recommence translation, which seems to be the essential function of trans-translation. The chain is SsrA-binding protein from Leifsonia xyli subsp. xyli (strain CTCB07).